Here is a 474-residue protein sequence, read N- to C-terminus: H/ACA ribonucleoprotein complex subunit cbf5 (474 aa).

The active-site Nucleophile is D100. Residues 271 to 346 (YKRIVVKDSA…VVAKVKRCIM (76 aa)) enclose the PUA domain. Disordered regions lie at residues 361 to 391 (SMKK…SKSY) and 406 to 474 (PVVA…KKSE). Basic and acidic residues predominate over residues 368–378 (KKEGKLDKYGR). Low complexity predominate over residues 406–419 (PVVAPAAPTVEAEV). Over residues 423 to 434 (EDSKKRKSVESS) the composition is skewed to basic and acidic residues. The tract at residues 434–468 (SEKDEDEAAKKEEKRRKKEAKKEKKEKKEKKEKKE) is 7 X 3 AA approximate tandem repeats of K-K-E. A run of 7 repeats spans residues 443–445 (KKE), 450–452 (KKE), 454–456 (KKE), 457–459 (KKE), 460–462 (KKE), 463–465 (KKE), and 466–468 (KKE). The span at 446-474 (EKRRKKEAKKEKKEKKEKKEKKEKKKKSE) shows a compositional bias: basic residues.

This sequence belongs to the pseudouridine synthase TruB family. Component of the small nucleolar ribonucleoprotein particles containing H/ACA-type snoRNAs (H/ACA snoRNPs).

It is found in the nucleus. The protein localises to the nucleolus. The catalysed reaction is uridine in 5S rRNA = pseudouridine in 5S rRNA. The enzyme catalyses uridine in snRNA = pseudouridine in snRNA. It catalyses the reaction a uridine in mRNA = a pseudouridine in mRNA. Catalytic subunit of H/ACA small nucleolar ribonucleoprotein (H/ACA snoRNP) complex, which catalyzes pseudouridylation of rRNA. This involves the isomerization of uridine such that the ribose is subsequently attached to C5, instead of the normal N1. Pseudouridine ('psi') residues may serve to stabilize the conformation of rRNAs and play a central role in ribosomal RNA processing. The H/ACA snoRNP complex also mediates pseudouridylation of other types of RNAs. Catalyzes pseudouridylation at position 93 in U2 snRNA. Also catalyzes pseudouridylation of mRNAs; H/ACA-type snoRNAs probably guide pseudouridylation of mRNAs. In Schizosaccharomyces pombe (strain 972 / ATCC 24843) (Fission yeast), this protein is H/ACA ribonucleoprotein complex subunit cbf5 (cbf5).